We begin with the raw amino-acid sequence, 226 residues long: Ribonuclease 3 (226 aa).

The 123-residue stretch at 5–127 (LERLQRALGY…IIGAIYLDAG (123 aa)) folds into the RNase III domain. Mg(2+) is bound at residue E40. D44 is a catalytic residue. Mg(2+)-binding residues include D113 and E116. The active site involves E116. Residues 154 to 224 (DSKTRLQEYL…AKQALLALGV (71 aa)) form the DRBM domain.

It belongs to the ribonuclease III family. Homodimer. Mg(2+) serves as cofactor.

It is found in the cytoplasm. It carries out the reaction Endonucleolytic cleavage to 5'-phosphomonoester.. Digests double-stranded RNA. Involved in the processing of primary rRNA transcript to yield the immediate precursors to the large and small rRNAs (23S and 16S). Processes some mRNAs, and tRNAs when they are encoded in the rRNA operon. Processes pre-crRNA and tracrRNA of type II CRISPR loci if present in the organism. The protein is Ribonuclease 3 of Hahella chejuensis (strain KCTC 2396).